The chain runs to 118 residues: Small ribosomal subunit protein uS13 (118 aa).

A disordered region spans residues H91–K118.

Belongs to the universal ribosomal protein uS13 family. Part of the 30S ribosomal subunit. Forms a loose heterodimer with protein S19. Forms two bridges to the 50S subunit in the 70S ribosome.

In terms of biological role, located at the top of the head of the 30S subunit, it contacts several helices of the 16S rRNA. In the 70S ribosome it contacts the 23S rRNA (bridge B1a) and protein L5 of the 50S subunit (bridge B1b), connecting the 2 subunits; these bridges are implicated in subunit movement. Contacts the tRNAs in the A and P-sites. The polypeptide is Small ribosomal subunit protein uS13 (Marinomonas sp. (strain MWYL1)).